Consider the following 91-residue polypeptide: Small ribosomal subunit protein uS19 (91 aa).

The protein belongs to the universal ribosomal protein uS19 family.

Its function is as follows. Protein S19 forms a complex with S13 that binds strongly to the 16S ribosomal RNA. In Azotobacter vinelandii (strain DJ / ATCC BAA-1303), this protein is Small ribosomal subunit protein uS19.